Here is a 1162-residue protein sequence, read N- to C-terminus: DNA-directed RNA polymerase subunit beta (1162 aa).

The protein belongs to the RNA polymerase beta chain family. In terms of assembly, the RNAP catalytic core consists of 2 alpha, 1 beta, 1 beta' and 1 omega subunit. When a sigma factor is associated with the core the holoenzyme is formed, which can initiate transcription.

The enzyme catalyses RNA(n) + a ribonucleoside 5'-triphosphate = RNA(n+1) + diphosphate. In terms of biological role, DNA-dependent RNA polymerase catalyzes the transcription of DNA into RNA using the four ribonucleoside triphosphates as substrates. The chain is DNA-directed RNA polymerase subunit beta from Clavibacter sepedonicus (Clavibacter michiganensis subsp. sepedonicus).